The sequence spans 452 residues: 5'-nucleotidase domain-containing protein 1 (452 aa).

The active-site Nucleophile is Asp16. Residues Asp16 and Asp18 each coordinate Mg(2+). Residue Asp18 is the Proton donor of the active site. Lys171 is modified (N6-acetyllysine). A Mg(2+)-binding site is contributed by Asp313. Basic and acidic residues predominate over residues Gly339–Lys361. Residues Gly339–Leu365 form a disordered region.

Belongs to the 5'(3')-deoxyribonucleotidase family.

The polypeptide is 5'-nucleotidase domain-containing protein 1 (NT5DC1) (Bos taurus (Bovine)).